Consider the following 86-residue polypeptide: Small ribosomal subunit protein bS18c (86 aa).

It belongs to the bacterial ribosomal protein bS18 family. Part of the 30S ribosomal subunit.

It is found in the plastid. Its subcellular location is the chloroplast. In Pseudotsuga menziesii (Douglas-fir), this protein is Small ribosomal subunit protein bS18c.